Here is a 319-residue protein sequence, read N- to C-terminus: MKRIGILTSGGDAPGMNAAVRAVTRVAIANGLEVFGIRYGFAGLVAGDIFPLESEDVAHLINVSGTFLYSARYPEFAEEEGQLAGIEQLKKHGIDAVVVIGGDGSYHGALQLTRHGFNSIGLPGTIDNDIPYTDATIGYDTACMTAMDAIDKIRDTASSHHRVFIVNVMGRNCGDIAMRVGVACGADAIVIPERPYDVEEIANRLKQAQESGKDHGLVVVAEGVMTADQFMAELKKYGDFDVRANVLGHMQRGGTPTVSDRVLASKLGSEAVHLLLEGKGGLAVGIENGKVTSHDILDLFDESHRGDYDLLKLNADLSR.

Gly11 lines the ATP pocket. Arg21 to Arg25 is an ADP binding site. Residues Arg72 to Tyr73 and Gly102 to Ser105 each bind ATP. Asp103 contributes to the Mg(2+) binding site. A substrate-binding site is contributed by Thr125–Asp127. Asp127 (proton acceptor) is an active-site residue. Arg154 provides a ligand contact to ADP. Residues Arg162 and Met169–Arg171 contribute to the substrate site. ADP-binding positions include Gly185 to Asp187 and Lys213 to His215. Residues Glu222, Arg243, and His249–Arg252 contribute to the substrate site.

Belongs to the phosphofructokinase type A (PFKA) family. ATP-dependent PFK group I subfamily. Prokaryotic clade 'B1' sub-subfamily. As to quaternary structure, homotetramer. Requires Mg(2+) as cofactor.

It is found in the cytoplasm. It catalyses the reaction beta-D-fructose 6-phosphate + ATP = beta-D-fructose 1,6-bisphosphate + ADP + H(+). Its pathway is carbohydrate degradation; glycolysis; D-glyceraldehyde 3-phosphate and glycerone phosphate from D-glucose: step 3/4. With respect to regulation, allosterically activated by ADP and other diphosphonucleosides, and allosterically inhibited by phosphoenolpyruvate. The binding affinities for these effectors are decreased however, and therefore the allosteric effect becomes apparent only at high effector concentrations. Functionally, catalyzes the phosphorylation of D-fructose 6-phosphate to fructose 1,6-bisphosphate by ATP, the first committing step of glycolysis. The polypeptide is ATP-dependent 6-phosphofructokinase (Lactobacillus delbrueckii subsp. bulgaricus).